We begin with the raw amino-acid sequence, 340 residues long: Cobalt-precorrin-5B C(1)-methyltransferase (340 aa).

It belongs to the CbiD family.

The enzyme catalyses Co-precorrin-5B + S-adenosyl-L-methionine = Co-precorrin-6A + S-adenosyl-L-homocysteine. The protein operates within cofactor biosynthesis; adenosylcobalamin biosynthesis; cob(II)yrinate a,c-diamide from sirohydrochlorin (anaerobic route): step 6/10. Catalyzes the methylation of C-1 in cobalt-precorrin-5B to form cobalt-precorrin-6A. This chain is Cobalt-precorrin-5B C(1)-methyltransferase, found in Methanococcoides burtonii (strain DSM 6242 / NBRC 107633 / OCM 468 / ACE-M).